The chain runs to 189 residues: Low affinity inorganic phosphate transporter 2 (189 aa).

Residues 1–55 (TARYTALVAKDAKRAAADMGKVLHVEIDPEDAKVERMAKDESNQFGLFSWEFVRR) are Cytoplasmic-facing. A helical transmembrane segment spans residues 56-76 (HGLHLFGTCSTWFLLDIAFYS). At 77–111 (QNLFQKDVFTAIGWIPPAKTMNAVQEVYKIARAQT) the chain is on the extracellular side. A helical membrane pass occupies residues 112 to 132 (LIALCSTVPGYWFTVAFIDII). Topologically, residues 133-134 (GR) are cytoplasmic. The helical transmembrane segment at 135–155 (FAIQLMGFFFMTVFMFAIAIP) threads the bilayer. At 156-165 (YHHWTLQENR) the chain is on the extracellular side. The helical transmembrane segment at 166–186 (IGFVIMYSLTFFFANFGPNAT) threads the bilayer. Residues 187 to 189 (TFV) are Cytoplasmic-facing.

Belongs to the major facilitator superfamily. Phosphate:H(+) symporter (TC 2.A.1.9) family.

The protein localises to the cell membrane. The enzyme catalyses phosphate(in) + H(+)(in) = phosphate(out) + H(+)(out). Its function is as follows. Low-affinity transporter for external inorganic phosphate (Pi). In Petunia hybrida (Petunia), this protein is Low affinity inorganic phosphate transporter 2.